Consider the following 395-residue polypeptide: ATP phosphoribosyltransferase regulatory subunit (395 aa).

The protein belongs to the class-II aminoacyl-tRNA synthetase family. HisZ subfamily. In terms of assembly, heteromultimer composed of HisG and HisZ subunits.

The protein localises to the cytoplasm. It participates in amino-acid biosynthesis; L-histidine biosynthesis; L-histidine from 5-phospho-alpha-D-ribose 1-diphosphate: step 1/9. Required for the first step of histidine biosynthesis. May allow the feedback regulation of ATP phosphoribosyltransferase activity by histidine. The polypeptide is ATP phosphoribosyltransferase regulatory subunit (Pseudomonas putida (strain ATCC 700007 / DSM 6899 / JCM 31910 / BCRC 17059 / LMG 24140 / F1)).